The primary structure comprises 454 residues: Bifunctional protein GlmU (454 aa).

Residues 1–225 (MNIVILAAGM…LWETLGVNSK (225 aa)) are pyrophosphorylase. UDP-N-acetyl-alpha-D-glucosamine-binding positions include 6 to 9 (LAAG), Lys20, Gln71, 76 to 77 (GT), 98 to 100 (YGD), Gly135, Glu150, Asn165, and Asn223. Asp100 is a binding site for Mg(2+). Asn223 serves as a coordination point for Mg(2+). Residues 226-246 (VQLAEVERIHQRNLAQRLLET) form a linker region. The segment at 247 to 454 (GVTLADPARI…WQRPVKKAKQ (208 aa)) is N-acetyltransferase. The UDP-N-acetyl-alpha-D-glucosamine site is built by Arg329 and Lys347. His359 serves as the catalytic Proton acceptor. UDP-N-acetyl-alpha-D-glucosamine-binding residues include Tyr362 and Asn373. Acetyl-CoA contacts are provided by residues Ala376, 382–383 (NY), Ser401, Ala419, and Arg436.

It in the N-terminal section; belongs to the N-acetylglucosamine-1-phosphate uridyltransferase family. In the C-terminal section; belongs to the transferase hexapeptide repeat family. In terms of assembly, homotrimer. Requires Mg(2+) as cofactor.

It is found in the cytoplasm. It catalyses the reaction alpha-D-glucosamine 1-phosphate + acetyl-CoA = N-acetyl-alpha-D-glucosamine 1-phosphate + CoA + H(+). The catalysed reaction is N-acetyl-alpha-D-glucosamine 1-phosphate + UTP + H(+) = UDP-N-acetyl-alpha-D-glucosamine + diphosphate. It participates in nucleotide-sugar biosynthesis; UDP-N-acetyl-alpha-D-glucosamine biosynthesis; N-acetyl-alpha-D-glucosamine 1-phosphate from alpha-D-glucosamine 6-phosphate (route II): step 2/2. Its pathway is nucleotide-sugar biosynthesis; UDP-N-acetyl-alpha-D-glucosamine biosynthesis; UDP-N-acetyl-alpha-D-glucosamine from N-acetyl-alpha-D-glucosamine 1-phosphate: step 1/1. The protein operates within bacterial outer membrane biogenesis; LPS lipid A biosynthesis. Catalyzes the last two sequential reactions in the de novo biosynthetic pathway for UDP-N-acetylglucosamine (UDP-GlcNAc). The C-terminal domain catalyzes the transfer of acetyl group from acetyl coenzyme A to glucosamine-1-phosphate (GlcN-1-P) to produce N-acetylglucosamine-1-phosphate (GlcNAc-1-P), which is converted into UDP-GlcNAc by the transfer of uridine 5-monophosphate (from uridine 5-triphosphate), a reaction catalyzed by the N-terminal domain. This chain is Bifunctional protein GlmU, found in Cupriavidus pinatubonensis (strain JMP 134 / LMG 1197) (Cupriavidus necator (strain JMP 134)).